The sequence spans 188 residues: Dual specificity protein phosphatase 18 (188 aa).

The Tyrosine-protein phosphatase domain occupies 19-160 (GLSQITKSLY…LIHYEFQLFG (142 aa)). The tract at residues 95 to 141 (MKQGRTLLHCAAGVSRSAALCLAYLMKYHAMSLLDAHTWTKSCRPII) is sufficient for mitochondrial localization. Cysteine 104 functions as the Phosphocysteine intermediate in the catalytic mechanism.

The protein belongs to the protein-tyrosine phosphatase family. Non-receptor class dual specificity subfamily.

It localises to the cytoplasm. Its subcellular location is the nucleus. It is found in the mitochondrion inner membrane. It carries out the reaction O-phospho-L-tyrosyl-[protein] + H2O = L-tyrosyl-[protein] + phosphate. The catalysed reaction is O-phospho-L-seryl-[protein] + H2O = L-seryl-[protein] + phosphate. The enzyme catalyses O-phospho-L-threonyl-[protein] + H2O = L-threonyl-[protein] + phosphate. Its function is as follows. Can dephosphorylate single and diphosphorylated synthetic MAPK peptides, with preference for the phosphotyrosine and diphosphorylated forms over phosphothreonine. In vitro, dephosphorylates p-nitrophenyl phosphate (pNPP). The chain is Dual specificity protein phosphatase 18 (DUSP18) from Pongo abelii (Sumatran orangutan).